Reading from the N-terminus, the 1009-residue chain is Putative receptor-like protein 8 (1009 aa).

Residues 1–22 (MKTNFVILLLLLCVFAISPSQQ) form the signal peptide. Residues 23 to 961 (EEINQHNPGI…EEDDEAPVDM (939 aa)) lie on the Extracellular side of the membrane. Residues N159 and N197 are each glycosylated (N-linked (GlcNAc...) asparagine). Residues 204 to 231 (FEEVRSLELSAGLNGFVDNVEGYKSLRK) form an LRR 1; degenerate repeat. LRR repeat units lie at residues 232 to 255 (LKNLEILDLSYNNRFNNNILPFIN), 257 to 281 (ATSLTSLSLQNNSMEGPFPFEEIKD), 282 to 305 (LTNLKLLDLSRNILKGPMQGLTHL), 306 to 329 (KKLKALDLSNNVFSSIMELQVVCE), 331 to 354 (KNLWELDLRENKFVGQLPLCLGRL), 355 to 377 (NKLRVLDLSSNQLNGNLPSTFNR), 379 to 402 (ESLEYLSLLDNNFTGFFSFDPLAN), 404 to 427 (TKLKVFKLSSTSDMLQIKTESEPK), 442 to 465 (LEKIPSFLLQDNLFTIFQMPATIV), 466 to 490 (HELQFLDFSVNDISGLLPDNIGYAL), 492 to 514 (NLLRMNGSRNGFQGHLPSSMGEM), 515 to 538 (VNITSLDLSYNNFSGKLPRRFVTG), 540 to 565 (FSLKHLKLSHNNFSGHFLPRETSFTS), 567 to 587 (EELRVDSNSFTGKIGVGLLSS), 588 to 612 (NTTLSVLDMSNNFLTGDIPSWMSNL), 613 to 636 (SGLTILSISNNFLEGTIPPSLLAI), 638 to 660 (FLSLIDLSGNLLSGSLPSRVGGE), 662 to 681 (GIKLFLHDNMLTGPIPDTLL), 682 to 705 (EKVQILDLRYNQLSGSIPQFVNTE), 707 to 728 (IYILLMKGNNLTGSMSRQLCDL), 729 to 752 (RNIRLLDLSDNKLNGFIPSCLYNL), 819 to 842 (LDYMYGMDLSSNELSGVIPAELGS), 843 to 866 (LSKLRVMNLSCNFLSSSIPSSFSN), 867 to 891 (LKDIESLDLSHNMLQGSIPQQLTNL), and 893 to 916 (SLVVFDVSYNNLSGIIPQGRQFNT). N267 is a glycosylation site (N-linked (GlcNAc...) asparagine). N-linked (GlcNAc...) asparagine glycosylation is found at N390 and N402. N497, N516, N526, and N551 each carry an N-linked (GlcNAc...) asparagine glycan. N-linked (GlcNAc...) asparagine glycosylation is found at N588 and N611. Residues N716 and N751 are each glycosylated (N-linked (GlcNAc...) asparagine). N850, N890, N903, and N934 each carry an N-linked (GlcNAc...) asparagine glycan. Residues 934 to 955 (NRSCDAKKTSDESENGGEEEDD) form a disordered region. A compositionally biased stretch (acidic residues) spans 945–955 (ESENGGEEEDD). Residues 962–982 (LAFYFSSASTYVTTLIGIFIL) traverse the membrane as a helical segment. The Cytoplasmic segment spans residues 983-1009 (MCFDCPLRRAWLRIVDASIASVKSMLP).

This sequence belongs to the RLP family.

It localises to the cell membrane. The sequence is that of Putative receptor-like protein 8 from Arabidopsis thaliana (Mouse-ear cress).